Here is a 240-residue protein sequence, read N- to C-terminus: Glutathione S-transferase theta-1 (240 aa).

The GST N-terminal domain maps to 2–82 (GLELYLDLLS…YLARKYKVPD (81 aa)). Glutathione contacts are provided by residues histidine 40, 53-54 (KV), and 66-67 (ES). Residues 88–226 (DLQACARVDE…AKDSQPADPT (139 aa)) form the GST C-terminal domain.

This sequence belongs to the GST superfamily. Theta family. In terms of assembly, homodimer.

It is found in the cytoplasm. It carries out the reaction RX + glutathione = an S-substituted glutathione + a halide anion + H(+). Its function is as follows. Conjugation of reduced glutathione to a wide number of exogenous and endogenous hydrophobic electrophiles. Also binds steroids, bilirubin, carcinogens and numerous organic anions. Has dichloromethane dehalogenase activity. The polypeptide is Glutathione S-transferase theta-1 (GSTT1) (Bos taurus (Bovine)).